The following is an 86-amino-acid chain: Small ribosomal subunit protein bS18 (86 aa).

This sequence belongs to the bacterial ribosomal protein bS18 family. Part of the 30S ribosomal subunit. Forms a tight heterodimer with protein bS6.

Functionally, binds as a heterodimer with protein bS6 to the central domain of the 16S rRNA, where it helps stabilize the platform of the 30S subunit. The protein is Small ribosomal subunit protein bS18 of Campylobacter lari (strain RM2100 / D67 / ATCC BAA-1060).